Reading from the N-terminus, the 180-residue chain is Cytokinin-beta-glucosidase 4 (180 aa).

In terms of biological role, hydrolyzes cytokinin glucosides thus liberating free cytokinins. This is Cytokinin-beta-glucosidase 4 (ROLC4) from Panax ginseng (Korean ginseng).